The primary structure comprises 463 residues: Hydroxyacid-oxoacid transhydrogenase, mitochondrial (463 aa).

It belongs to the iron-containing alcohol dehydrogenase family. Hydroxyacid-oxoacid transhydrogenase subfamily.

It is found in the mitochondrion. It catalyses the reaction (S)-3-hydroxybutanoate + 2-oxoglutarate = (R)-2-hydroxyglutarate + acetoacetate. The catalysed reaction is 4-hydroxybutanoate + 2-oxoglutarate = (R)-2-hydroxyglutarate + succinate semialdehyde. Catalyzes the cofactor-independent reversible oxidation of gamma-hydroxybutyrate (GHB) to succinic semialdehyde (SSA) coupled to reduction of 2-ketoglutarate (2-KG) to D-2-hydroxyglutarate (D-2-HG). L-3-hydroxybutyrate (L-3-OHB) is also a substrate for HOT when using 2-KG as hydrogen acceptor, resulting in the formation of D-2-HG. In Xenopus laevis (African clawed frog), this protein is Hydroxyacid-oxoacid transhydrogenase, mitochondrial (adhfe1).